Here is a 102-residue protein sequence, read N- to C-terminus: Large ribosomal subunit protein uL23 (102 aa).

It belongs to the universal ribosomal protein uL23 family. As to quaternary structure, part of the 50S ribosomal subunit. Contacts protein L29, and trigger factor when it is bound to the ribosome.

One of the early assembly proteins it binds 23S rRNA. One of the proteins that surrounds the polypeptide exit tunnel on the outside of the ribosome. Forms the main docking site for trigger factor binding to the ribosome. This is Large ribosomal subunit protein uL23 from Chromobacterium violaceum (strain ATCC 12472 / DSM 30191 / JCM 1249 / CCUG 213 / NBRC 12614 / NCIMB 9131 / NCTC 9757 / MK).